A 533-amino-acid polypeptide reads, in one-letter code: Tyrosine-protein kinase transforming protein Fps (533 aa).

The interval 1–46 is disordered; it reads ASGQLHRPQPQEHTSTSAAAGTWRHTQASESRHRLPHCSAAPSHQD. Over residues 11 to 29 the composition is skewed to polar residues; sequence QEHTSTSAAAGTWRHTQAS. In terms of domain architecture, F-BAR; degenerate spans 50–124; sequence MGFGPELWCP…LQEDRQSVCS (75 aa). The SH2 domain maps to 171–260; the sequence is WYHGAIPRSE…KSGIVLTRAV (90 aa). A Protein kinase domain is found at 272–525; the sequence is VLLGERIGRG…PSFGAVHQDL (254 aa). ATP-binding positions include 278 to 286 and lysine 301; that span reads IGRGNFGEV. Catalysis depends on aspartate 394, which acts as the Proton acceptor. Tyrosine 424 carries the phosphotyrosine; by autocatalysis modification.

Belongs to the protein kinase superfamily. Tyr protein kinase family. Fes/fps subfamily.

The catalysed reaction is L-tyrosyl-[protein] + ATP = O-phospho-L-tyrosyl-[protein] + ADP + H(+). The protein is Tyrosine-protein kinase transforming protein Fps (V-FPS) of Gallus gallus (Chicken).